Here is a 92-residue protein sequence, read N- to C-terminus: Cell division protein FtsB (92 aa).

The Cytoplasmic portion of the chain corresponds to M1–L3. A helical transmembrane segment spans residues F4–F21. Topologically, residues G22–D92 are periplasmic. The stretch at D28–E62 forms a coiled coil.

The protein belongs to the FtsB family. As to quaternary structure, part of a complex composed of FtsB, FtsL and FtsQ.

The protein resides in the cell inner membrane. Essential cell division protein. May link together the upstream cell division proteins, which are predominantly cytoplasmic, with the downstream cell division proteins, which are predominantly periplasmic. The polypeptide is Cell division protein FtsB (Psychromonas ingrahamii (strain DSM 17664 / CCUG 51855 / 37)).